The sequence spans 453 residues: 13-hydroxylupanine O-tigloyltransferase (453 aa).

Residues histidine 166 and aspartate 385 each act as proton acceptor in the active site.

This sequence belongs to the plant acyltransferase family. As to quaternary structure, monomer. Expressed in roots and hypocotyls. Detected in seeds, leaves and cotyledons, but not in young developing leaves.

It catalyses the reaction 13-hydroxylupanine + (2E)-2-methylbut-2-enoyl-CoA = 13-(2-methylcrotonoyloxy)lupanine + CoA. With respect to regulation, inhibited by N-ethylmaleimide, p-chloromercuribenzoic acid and diethylpyrocarbonate (DEPC). In terms of biological role, acyl-CoA-dependent acyltransferase involved in the synthesis of lupanine alkaloids. Can use both (-)-13alpha-hydroxymultiflorine and (+)-13alpha-hydroxylupanine as substrates. Lower activity with (-)-3beta, 13alpha-dihydroxylupanine, but no activity with (+)-epilupinine and (-)-lupinine as substrates. Tigloyl-CoA, benzoyl-CoA and, more slowly, acetyl-CoA, propionyl-CoA and 2-butenoyl-CoA can act as acyl donors. The polypeptide is 13-hydroxylupanine O-tigloyltransferase (HMT/HLT) (Lupinus albus (White lupine)).